The following is a 156-amino-acid chain: uncharacterized protein (156 aa).

This sequence belongs to the mimivirus L223/L227/L812 family.

This is an uncharacterized protein from Acanthamoeba polyphaga mimivirus (APMV).